A 133-amino-acid chain; its full sequence is uncharacterized protein (133 aa).

Positions 1-130 (MPNIVEIAVS…GIIHVIDNVI (130 aa)) constitute an FAS1 domain.

This is an uncharacterized protein from Synechocystis sp. (strain ATCC 27184 / PCC 6803 / Kazusa).